The primary structure comprises 339 residues: Phenylalanine--tRNA ligase alpha subunit (339 aa).

Mg(2+) is bound at residue Glu254.

This sequence belongs to the class-II aminoacyl-tRNA synthetase family. Phe-tRNA synthetase alpha subunit type 1 subfamily. Tetramer of two alpha and two beta subunits. Requires Mg(2+) as cofactor.

It is found in the cytoplasm. The enzyme catalyses tRNA(Phe) + L-phenylalanine + ATP = L-phenylalanyl-tRNA(Phe) + AMP + diphosphate + H(+). This Clostridium perfringens (strain ATCC 13124 / DSM 756 / JCM 1290 / NCIMB 6125 / NCTC 8237 / Type A) protein is Phenylalanine--tRNA ligase alpha subunit.